The chain runs to 815 residues: BTB/POZ domain-containing protein KCTD3 (815 aa).

The region spanning 18–87 (EIVQLNVGGT…LRTKELDLRG (70 aa)) is the BTB domain. The segment covering 139-168 (INNTVRSADSRNGLNSTEGEARGNGTQPVL) has biased composition (polar residues). The segment at 139-170 (INNTVRSADSRNGLNSTEGEARGNGTQPVLSG) is disordered. 8 WD repeats span residues 174–218 (ETVR…GWQQ), 224–263 (YLDW…LWSV), 270–305 (SEIG…VWNA), 310–342 (WQVQ…YIDM), 354–404 (LLVT…VQHP), 412–449 (QLFQ…TWTV), 457–504 (STQP…IQKV), and 510–569 (KLFV…MWDL). The interaction with HCN3 stretch occupies residues 512–815 (FVRLSSTGKR…SDSSGQEYSL (304 aa)). Phosphoserine is present on residues S604, S664, and S711. Residues 736 to 758 (SESKKRSSEDENENKIEFRKKGG) show a composition bias toward basic and acidic residues. The interval 736 to 815 (SESKKRSSED…SDSSGQEYSL (80 aa)) is disordered. Over residues 774 to 800 (ASSPSTSDGGTDSPGTASPSPTKTTPS) the composition is skewed to low complexity. S793 is modified (phosphoserine).

Belongs to the KCTD3 family. As to quaternary structure, interacts with HCN3. As to expression, broadly expressed in normal tissues.

The protein localises to the cell membrane. Functionally, accessory subunit of potassium/sodium hyperpolarization-activated cyclic nucleotide-gated channel 3 (HCN3) up-regulating its cell-surface expression and current density without affecting its voltage dependence and kinetics. The chain is BTB/POZ domain-containing protein KCTD3 (KCTD3) from Homo sapiens (Human).